A 430-amino-acid polypeptide reads, in one-letter code: Glucose-6-phosphate isomerase (430 aa).

Catalysis depends on Glu284, which acts as the Proton donor. Active-site residues include His305 and Lys420.

This sequence belongs to the GPI family.

The protein localises to the cytoplasm. It catalyses the reaction alpha-D-glucose 6-phosphate = beta-D-fructose 6-phosphate. Its pathway is carbohydrate biosynthesis; gluconeogenesis. The protein operates within carbohydrate degradation; glycolysis; D-glyceraldehyde 3-phosphate and glycerone phosphate from D-glucose: step 2/4. Its function is as follows. Catalyzes the reversible isomerization of glucose-6-phosphate to fructose-6-phosphate. This chain is Glucose-6-phosphate isomerase, found in Mycoplasma pneumoniae (strain ATCC 29342 / M129 / Subtype 1) (Mycoplasmoides pneumoniae).